A 291-amino-acid chain; its full sequence is Acetyl-coenzyme A carboxylase carboxyl transferase subunit beta (291 aa).

One can recognise a CoA carboxyltransferase N-terminal domain in the interval 36-291 (MWVKCDGCGK…KILVIHGRGN (256 aa)). Residues Cys-40, Cys-43, Cys-59, and Cys-62 each contribute to the Zn(2+) site. The C4-type zinc finger occupies 40–62 (CDGCGKVLYKNDMEKNNKVCYHC).

This sequence belongs to the AccD/PCCB family. As to quaternary structure, acetyl-CoA carboxylase is a heterohexamer composed of biotin carboxyl carrier protein (AccB), biotin carboxylase (AccC) and two subunits each of ACCase subunit alpha (AccA) and ACCase subunit beta (AccD). It depends on Zn(2+) as a cofactor.

It is found in the cytoplasm. The catalysed reaction is N(6)-carboxybiotinyl-L-lysyl-[protein] + acetyl-CoA = N(6)-biotinyl-L-lysyl-[protein] + malonyl-CoA. It participates in lipid metabolism; malonyl-CoA biosynthesis; malonyl-CoA from acetyl-CoA: step 1/1. In terms of biological role, component of the acetyl coenzyme A carboxylase (ACC) complex. Biotin carboxylase (BC) catalyzes the carboxylation of biotin on its carrier protein (BCCP) and then the CO(2) group is transferred by the transcarboxylase to acetyl-CoA to form malonyl-CoA. The chain is Acetyl-coenzyme A carboxylase carboxyl transferase subunit beta from Clostridium kluyveri (strain NBRC 12016).